A 93-amino-acid chain; its full sequence is Small ribosomal subunit protein uS19 (93 aa).

Belongs to the universal ribosomal protein uS19 family.

Functionally, protein S19 forms a complex with S13 that binds strongly to the 16S ribosomal RNA. The protein is Small ribosomal subunit protein uS19 of Paenarthrobacter aurescens (strain TC1).